The sequence spans 149 residues: Transcriptional regulator MraZ (149 aa).

2 SpoVT-AbrB domains span residues 6–52 (RSYR…TPED) and 81–124 (VEEL…SEEE).

This sequence belongs to the MraZ family. Forms oligomers.

It localises to the cytoplasm. The protein localises to the nucleoid. This Oleidesulfovibrio alaskensis (strain ATCC BAA-1058 / DSM 17464 / G20) (Desulfovibrio alaskensis) protein is Transcriptional regulator MraZ.